The primary structure comprises 100 residues: Cytochrome b (100 aa).

3 consecutive transmembrane segments (helical) span residues 1 to 21 (MGSL…FLAM), 45 to 66 (WLIR…YLHI), and 81 to 100 (WNIG…VGYV). Residues histidine 51 and histidine 65 each contribute to the heme b site.

Belongs to the cytochrome b family. In terms of assembly, the cytochrome bc1 complex contains 3 respiratory subunits (MT-CYB, CYC1 and UQCRFS1), 2 core proteins (UQCRC1 and UQCRC2) and probably 6 low-molecular weight proteins. The cofactor is heme b.

It is found in the mitochondrion inner membrane. In terms of biological role, component of the ubiquinol-cytochrome c reductase complex (complex III or cytochrome b-c1 complex) that is part of the mitochondrial respiratory chain. The b-c1 complex mediates electron transfer from ubiquinol to cytochrome c. Contributes to the generation of a proton gradient across the mitochondrial membrane that is then used for ATP synthesis. The protein is Cytochrome b (mt-cyb) of Polypterus sp. (Bichir).